The sequence spans 208 residues: Ribosomal RNA large subunit methyltransferase E (208 aa).

Residues Gly-62, Trp-64, Asp-82, Asp-98, and Asp-123 each contribute to the S-adenosyl-L-methionine site. Lys-163 serves as the catalytic Proton acceptor.

It belongs to the class I-like SAM-binding methyltransferase superfamily. RNA methyltransferase RlmE family.

Its subcellular location is the cytoplasm. The enzyme catalyses uridine(2552) in 23S rRNA + S-adenosyl-L-methionine = 2'-O-methyluridine(2552) in 23S rRNA + S-adenosyl-L-homocysteine + H(+). Its function is as follows. Specifically methylates the uridine in position 2552 of 23S rRNA at the 2'-O position of the ribose in the fully assembled 50S ribosomal subunit. In Edwardsiella ictaluri (strain 93-146), this protein is Ribosomal RNA large subunit methyltransferase E.